We begin with the raw amino-acid sequence, 314 residues long: Malate dehydrogenase (314 aa).

NAD(+) is bound by residues 12–17 (GAGFTG) and aspartate 36. Substrate-binding residues include arginine 87 and arginine 93. Residues asparagine 100 and 123–125 (LTN) each bind NAD(+). Asparagine 125 is a substrate binding site. Serine 149 is subject to Phosphoserine. Substrate is bound at residue arginine 156. Histidine 180 (proton acceptor) is an active-site residue.

This sequence belongs to the LDH/MDH superfamily. MDH type 3 family.

It carries out the reaction (S)-malate + NAD(+) = oxaloacetate + NADH + H(+). In terms of biological role, catalyzes the reversible oxidation of malate to oxaloacetate. In Halalkalibacterium halodurans (strain ATCC BAA-125 / DSM 18197 / FERM 7344 / JCM 9153 / C-125) (Bacillus halodurans), this protein is Malate dehydrogenase.